Consider the following 49-residue polypeptide: Thymopoietin-1 (49 aa).

The LEM-like domain occupies 4–47; sequence LEDPSVLTKEKLKSELVANNVTLPAGEQRKDVYVELYLQHLTAL. A biological activity region spans residues 32 to 36; it reads RKDVY.

It belongs to the thymopoietin family.

Hormone of the thymus with pleiotropic actions on prothymocytes, mature T-cells, the nicotinic acetylcholine receptor, and pituitary corticotrophs. This chain is Thymopoietin-1, found in Bos taurus (Bovine).